A 306-amino-acid polypeptide reads, in one-letter code: D-alanine--D-alanine ligase (306 aa).

Residues Glu-18 and Ser-150 contribute to the active site. The 200-residue stretch at 104–303 folds into the ATP-grasp domain; that stretch reads KMLWKAFGLP…FEQLVVKILE (200 aa). 134–189 contacts ATP; the sequence is VAKLGLPLMVKPSLEGSSVGLTKVKAVEELKSAVEYALKFDNTILIEEWLAGDELT. Mg(2+) is bound by residues Asp-257, Glu-270, and Asn-272. Residue Ser-281 is part of the active site.

It belongs to the D-alanine--D-alanine ligase family. The cofactor is Mg(2+). It depends on Mn(2+) as a cofactor.

Its subcellular location is the cytoplasm. The enzyme catalyses 2 D-alanine + ATP = D-alanyl-D-alanine + ADP + phosphate + H(+). Its pathway is cell wall biogenesis; peptidoglycan biosynthesis. Functionally, cell wall formation. This is D-alanine--D-alanine ligase from Haemophilus influenzae (strain ATCC 51907 / DSM 11121 / KW20 / Rd).